Here is a 234-residue protein sequence, read N- to C-terminus: Potassium/proton antiporter CemA (234 aa).

4 helical membrane passes run 8-28, 117-137, 157-177, and 193-213; these read IPLR…WIPL, TICF…LFIL, ILFV…ELLI, and IILS…FKYW.

Belongs to the CemA family.

The protein localises to the plastid. The protein resides in the chloroplast inner membrane. It carries out the reaction K(+)(in) + H(+)(out) = K(+)(out) + H(+)(in). In terms of biological role, contributes to K(+)/H(+) antiport activity by supporting proton efflux to control proton extrusion and homeostasis in chloroplasts in a light-dependent manner to modulate photosynthesis. Prevents excessive induction of non-photochemical quenching (NPQ) under continuous-light conditions. Indirectly promotes efficient inorganic carbon uptake into chloroplasts. This is Potassium/proton antiporter CemA from Citrus sinensis (Sweet orange).